We begin with the raw amino-acid sequence, 85 residues long: MKVTLIAILTCAAVLVLHTTAAEELEAESQLMEVGMPDTELEAVDEERLFECSVSCEIEKEGNKDCKKKKCKGGWKCKFNMCVKV.

Residues 1-22 form the signal peptide; that stretch reads MKVTLIAILTCAAVLVLHTTAA. Residues 23 to 48 constitute a propeptide that is removed on maturation; sequence EELEAESQLMEVGMPDTELEAVDEER. 3 disulfides stabilise this stretch: cysteine 52-cysteine 66, cysteine 56-cysteine 77, and cysteine 71-cysteine 82.

Belongs to the neurotoxin 12 (Hwtx-2) family. 02 (Hwtx-2) subfamily. As to quaternary structure, monomer. Expressed by the venom gland.

The protein localises to the secreted. In terms of biological role, neurotoxin active on both insects and mammals. The polypeptide is U4-theraphotoxin-Hhn1a (Cyriopagopus hainanus (Chinese bird spider)).